The following is a 279-amino-acid chain: Type II iodothyronine deiodinase (279 aa).

Topologically, residues 1-7 (MGLLSAD) are lumenal. Residues 8–28 (LLITLQILPVFFSNCLFLALY) traverse the membrane as a helical; Signal-anchor for type III membrane protein segment. The Cytoplasmic segment spans residues 29–279 (DSVILLKHMV…TEDLSTDVSL (251 aa)). Sec132 is an active-site residue. Residues Sec132 and Sec265 are each a non-standard amino acid (selenocysteine).

This sequence belongs to the iodothyronine deiodinase family. Predominantly monomer. Can form homodimers but homodimerization is not essential for enzyme activity. As to expression, highly expressed in liver and in various parts of the brain including telencephalon, hippocampus, cerebellum, and brain stem, and weakly expressed in thyroid, lung, and small intestine. Not detected in skeletal muscle, heart atria or ventricle, gizzard or kidney.

The protein localises to the endoplasmic reticulum membrane. It catalyses the reaction 3,3',5-triiodo-L-thyronine + iodide + A + H(+) = L-thyroxine + AH2. The enzyme catalyses 3,3'-diiodo-L-thyronine + iodide + A + H(+) = 3,3',5'-triiodo-L-thyronine + AH2. It carries out the reaction 3'-iodo-L-thyronine + iodide + A + H(+) = 3',5'-diiodo-L-thyronine + AH2. The catalysed reaction is 3,3'-diiodothyronamine + iodide + A + H(+) = 3,3',5'-triiodothyronamine + AH2. It catalyses the reaction 3'-iodothyronamine + iodide + A + H(+) = 3',5'-diiodothyronamine + AH2. Not inhibited by N(6)-propylthiouracil. Functionally, plays a crucial role in the metabolism of thyroid hormones (TH) and has specific roles in TH activation and inactivation by deiodination. Catalyzes the deiodination of L-thyroxine (T4) to 3,5,3'-triiodothyronine (T3) and 3,3',5'-triiodothyronine (rT3) to 3,3'-diiodothyronine (3,3'-T2) via outer-ring deiodination (ORD). Catalyzes the deiodination of 3',5'-diiodothyronine (3',5'-T2) to 3'-monoiodothyronine (3'-T1) via ORD. Catalyzes the phenolic ring deiodinations of 3,3',5'-triiodothyronamine and 3',5'- diiodothyronamine. The sequence is that of Type II iodothyronine deiodinase (DIO2) from Gallus gallus (Chicken).